The primary structure comprises 679 residues: UvrABC system protein B (679 aa).

The Helicase ATP-binding domain occupies 25 to 190; the sequence is EGVNQGQRYQ…SRNDFDITRG (166 aa). 38–45 is a binding site for ATP; the sequence is GATGTGKT. Positions 91-114 match the Beta-hairpin motif; the sequence is YYDYYQPEAYVPVSDTYIAKTASI. Residues 429-591 enclose the Helicase C-terminal domain; the sequence is QVDDLLAEIR…IVPRPAGKRA (163 aa). The UVR domain maps to 639–674; it reads PELIDQLETKMKEAAKNLNFEEAASLRDRIKKFRQK.

It belongs to the UvrB family. In terms of assembly, forms a heterotetramer with UvrA during the search for lesions. Interacts with UvrC in an incision complex.

The protein resides in the cytoplasm. The UvrABC repair system catalyzes the recognition and processing of DNA lesions. A damage recognition complex composed of 2 UvrA and 2 UvrB subunits scans DNA for abnormalities. Upon binding of the UvrA(2)B(2) complex to a putative damaged site, the DNA wraps around one UvrB monomer. DNA wrap is dependent on ATP binding by UvrB and probably causes local melting of the DNA helix, facilitating insertion of UvrB beta-hairpin between the DNA strands. Then UvrB probes one DNA strand for the presence of a lesion. If a lesion is found the UvrA subunits dissociate and the UvrB-DNA preincision complex is formed. This complex is subsequently bound by UvrC and the second UvrB is released. If no lesion is found, the DNA wraps around the other UvrB subunit that will check the other stand for damage. The sequence is that of UvrABC system protein B from Prochlorococcus marinus (strain MIT 9303).